Consider the following 394-residue polypeptide: Elongation factor Tu (394 aa).

The 195-residue stretch at 10-204 (KPHVNIGTIG…AVDSYIPQPV (195 aa)) folds into the tr-type G domain. The segment at 19–26 (GHVDHGKT) is G1. 19–26 (GHVDHGKT) contacts GTP. T26 serves as a coordination point for Mg(2+). Residues 60 to 64 (GITIS) form a G2 region. The segment at 81-84 (DCPG) is G3. Residues 81-85 (DCPGH) and 136-139 (NKVD) contribute to the GTP site. The G4 stretch occupies residues 136-139 (NKVD). The segment at 174–176 (SAL) is G5.

It belongs to the TRAFAC class translation factor GTPase superfamily. Classic translation factor GTPase family. EF-Tu/EF-1A subfamily. Monomer.

The protein resides in the cytoplasm. The catalysed reaction is GTP + H2O = GDP + phosphate + H(+). GTP hydrolase that promotes the GTP-dependent binding of aminoacyl-tRNA to the A-site of ribosomes during protein biosynthesis. The sequence is that of Elongation factor Tu from Rickettsia parkeri.